The sequence spans 172 residues: MNAKTKLVTDRIRLRCMEDRDQATLFGLLFNDPDVMTYYSGLKDKRQTREWVNWNQRNEKGYGVSLWIAEDKRTGEFLGQCGIVPQQIENQTVMEIGYMFARRHWGNGYAQEAARACLDYGFNERQFGKMAALIDPGNKASIRVAEKIGMHYSKTIRKWNKPIAVYERKSYN.

An N-acetyltransferase domain is found at 12–172; the sequence is IRLRCMEDRD…IAVYERKSYN (161 aa).

This is an uncharacterized protein from Bacillus subtilis (strain 168).